We begin with the raw amino-acid sequence, 1398 residues long: MAP-homologous protein 1 (1398 aa).

Residue Met1 is modified to N-acetylmethionine. The interval Gly21–Gly77 is disordered. Polar residues predominate over residues Ser27–Pro36. A compositionally biased stretch (low complexity) spans Ser63 to Ser73. Residue Ser81 is modified to Phosphoserine. Disordered stretches follow at residues Asn90 to Pro144, His156 to Ile186, and Thr191 to Tyr210. Composition is skewed to polar residues over residues Gln91 to Thr102 and Val114 to Glu123. Positions Lys159 to Ile186 are enriched in basic and acidic residues. Residue Lys221 forms a Glycyl lysine isopeptide (Lys-Gly) (interchain with G-Cter in ubiquitin) linkage. Thr222 bears the Phosphothreonine mark. Disordered stretches follow at residues His244–Arg270, Ser296–His382, Gly395–Glu428, and Asn515–Gln548. 4 positions are modified to phosphoserine: Ser309, Ser311, Ser354, and Ser357. The segment covering Ser357–Ser371 has biased composition (low complexity). Positions Ala372–Ser381 are enriched in polar residues. A compositionally biased stretch (low complexity) spans Asn396–Ser426. Residues Ala521–Glu538 show a composition bias toward basic and acidic residues. Residue Thr577 is modified to Phosphothreonine. The span at Ser605 to Ser615 shows a compositional bias: low complexity. Disordered stretches follow at residues Ser605–Pro630, Leu1148–Glu1169, and Asp1203–Val1223. Residues Gly1160–Glu1169 are compositionally biased toward polar residues. The segment covering Val1208–Val1223 has biased composition (basic and acidic residues). Residues Asp1227–Leu1258 are tau/MAP repeat-like. Residues Gln1313–Asn1372 form a disordered region. Positions Gln1325–Ser1337 are enriched in low complexity. Residues Pro1338 to Asn1355 show a composition bias toward polar residues.

The protein localises to the cytoplasm. Its subcellular location is the cytoskeleton. It is found in the spindle. Functionally, essential for the formation and/or stabilization of microtubules. Binds to microtubules in vitro. The protein is MAP-homologous protein 1 (MHP1) of Saccharomyces cerevisiae (strain ATCC 204508 / S288c) (Baker's yeast).